The primary structure comprises 514 residues: Maturase K (514 aa).

It belongs to the intron maturase 2 family. MatK subfamily.

The protein resides in the plastid. It localises to the chloroplast. Functionally, usually encoded in the trnK tRNA gene intron. Probably assists in splicing its own and other chloroplast group II introns. This is Maturase K from Encephalartos altensteinii (Altenstein's bread tree).